The following is a 581-amino-acid chain: Arginine--tRNA ligase (581 aa).

The 'HIGH' region signature appears at 126–136; it reads PNLAKEMHVGH.

This sequence belongs to the class-I aminoacyl-tRNA synthetase family. In terms of assembly, monomer.

The protein resides in the cytoplasm. The enzyme catalyses tRNA(Arg) + L-arginine + ATP = L-arginyl-tRNA(Arg) + AMP + diphosphate. In Shewanella woodyi (strain ATCC 51908 / MS32), this protein is Arginine--tRNA ligase.